The sequence spans 505 residues: Probable cytosol aminopeptidase (505 aa).

Positions 269 and 274 each coordinate Mn(2+). Residue lysine 281 is part of the active site. Mn(2+) is bound by residues aspartate 292, aspartate 351, and glutamate 353. Arginine 355 is a catalytic residue.

It belongs to the peptidase M17 family. Mn(2+) serves as cofactor.

It is found in the cytoplasm. The enzyme catalyses Release of an N-terminal amino acid, Xaa-|-Yaa-, in which Xaa is preferably Leu, but may be other amino acids including Pro although not Arg or Lys, and Yaa may be Pro. Amino acid amides and methyl esters are also readily hydrolyzed, but rates on arylamides are exceedingly low.. It catalyses the reaction Release of an N-terminal amino acid, preferentially leucine, but not glutamic or aspartic acids.. Functionally, presumably involved in the processing and regular turnover of intracellular proteins. Catalyzes the removal of unsubstituted N-terminal amino acids from various peptides. This Rhodococcus jostii (strain RHA1) protein is Probable cytosol aminopeptidase.